The sequence spans 196 residues: Imidazoleglycerol-phosphate dehydratase (196 aa).

Belongs to the imidazoleglycerol-phosphate dehydratase family.

It is found in the cytoplasm. It carries out the reaction D-erythro-1-(imidazol-4-yl)glycerol 3-phosphate = 3-(imidazol-4-yl)-2-oxopropyl phosphate + H2O. The protein operates within amino-acid biosynthesis; L-histidine biosynthesis; L-histidine from 5-phospho-alpha-D-ribose 1-diphosphate: step 6/9. The polypeptide is Imidazoleglycerol-phosphate dehydratase (Clostridium botulinum (strain Langeland / NCTC 10281 / Type F)).